The primary structure comprises 489 residues: Amino acid transporter AVT6E (489 aa).

A run of 11 helical transmembrane segments spans residues 76–96, 102–122, 156–176, 201–221, 227–247, 269–289, 310–330, 357–377, 404–424, 425–445, and 461–481; these read GIYG…IMAL, VLGL…SEIS, ICII…MGDV, VLIL…NKID, SAAS…VATI, ILDL…HFNV, ITTA…YLLF, IVRI…HFSL, VVLL…WTAF, KFTG…LIAL, and VSWL…IGNI.

It belongs to the amino acid/polyamine transporter 2 family. Amino acid/auxin permease (AAAP) (TC 2.A.18.6) subfamily.

It is found in the endoplasmic reticulum membrane. The protein resides in the vacuole membrane. The sequence is that of Amino acid transporter AVT6E from Arabidopsis thaliana (Mouse-ear cress).